Reading from the N-terminus, the 215-residue chain is Vacuolar ATPase assembly integral membrane protein VPH2 (215 aa).

At 1–134 the chain is on the cytoplasmic side; the sequence is MFEIKLNDRI…SQINKQIKEQ (134 aa). Residues 135–155 form a helical membrane-spanning segment; it reads VTTVFNVLVSVISVVVAIWYW. The Lumenal segment spans residues 156–167; that stretch reads TGSSTNFPVHVR. The chain crosses the membrane as a helical span at residues 168–186; sequence LLLCLFFGILVLVADVVVY. The Cytoplasmic segment spans residues 187 to 215; it reads NSYLKKLEEAKVKEKTKVEKKKVLSKITL.

The protein resides in the endoplasmic reticulum membrane. Functionally, required for vacuolar ATPase assembly. This Saccharomyces cerevisiae (strain ATCC 204508 / S288c) (Baker's yeast) protein is Vacuolar ATPase assembly integral membrane protein VPH2 (VPH2).